We begin with the raw amino-acid sequence, 117 residues long: Large ribosomal subunit protein bL19 (117 aa).

Belongs to the bacterial ribosomal protein bL19 family.

Functionally, this protein is located at the 30S-50S ribosomal subunit interface and may play a role in the structure and function of the aminoacyl-tRNA binding site. The protein is Large ribosomal subunit protein bL19 of Shewanella denitrificans (strain OS217 / ATCC BAA-1090 / DSM 15013).